Reading from the N-terminus, the 182-residue chain is Putative manganese efflux pump MntP 1 (182 aa).

Helical transmembrane passes span 4-24, 42-62, 63-83, 103-123, 127-147, and 162-182; these read LLLLSLALSMDAFAVSLGLGA, IFQGIMPLLGFFVGVTFIAFI, SAFDHYLAFGILALIGAKMIY, LILSIATSIDALAAGVSLHLI, VFLSCTIIAFTTFLLSYLGVL, and ILGGVILIGIGSKILLEHLFF.

It belongs to the MntP (TC 9.B.29) family.

The protein localises to the cell inner membrane. Functionally, probably functions as a manganese efflux pump. The polypeptide is Putative manganese efflux pump MntP 1 (Wolinella succinogenes (strain ATCC 29543 / DSM 1740 / CCUG 13145 / JCM 31913 / LMG 7466 / NCTC 11488 / FDC 602W) (Vibrio succinogenes)).